We begin with the raw amino-acid sequence, 459 residues long: Asparagine--tRNA ligase (459 aa).

Belongs to the class-II aminoacyl-tRNA synthetase family. As to quaternary structure, homodimer.

The protein localises to the cytoplasm. The catalysed reaction is tRNA(Asn) + L-asparagine + ATP = L-asparaginyl-tRNA(Asn) + AMP + diphosphate + H(+). This Pelobacter propionicus (strain DSM 2379 / NBRC 103807 / OttBd1) protein is Asparagine--tRNA ligase.